We begin with the raw amino-acid sequence, 199 residues long: Recombination protein RecR (199 aa).

A C4-type zinc finger spans residues 57-72; that stretch reads CPICGNITEKEICDIC. A Toprim domain is found at 80–176; that stretch reads TTIMVVEQPK…KVTRLAAGLS (97 aa).

This sequence belongs to the RecR family.

May play a role in DNA repair. It seems to be involved in an RecBC-independent recombinational process of DNA repair. It may act with RecF and RecO. In Lactobacillus acidophilus (strain ATCC 700396 / NCK56 / N2 / NCFM), this protein is Recombination protein RecR.